The following is a 396-amino-acid chain: 1-deoxy-D-xylulose 5-phosphate reductoisomerase (396 aa).

Residues threonine 13, glycine 14, serine 15, isoleucine 16, and asparagine 127 each contribute to the NADPH site. Lysine 128 is a binding site for 1-deoxy-D-xylulose 5-phosphate. Glutamate 129 provides a ligand contact to NADPH. Position 153 (aspartate 153) interacts with Mn(2+). The 1-deoxy-D-xylulose 5-phosphate site is built by serine 154, glutamate 155, serine 184, and histidine 207. Glutamate 155 lines the Mn(2+) pocket. Residue glycine 213 participates in NADPH binding. The 1-deoxy-D-xylulose 5-phosphate site is built by serine 220, asparagine 225, lysine 226, and glutamate 229. Glutamate 229 contacts Mn(2+).

It belongs to the DXR family. Requires Mg(2+) as cofactor. Mn(2+) is required as a cofactor.

It catalyses the reaction 2-C-methyl-D-erythritol 4-phosphate + NADP(+) = 1-deoxy-D-xylulose 5-phosphate + NADPH + H(+). It participates in isoprenoid biosynthesis; isopentenyl diphosphate biosynthesis via DXP pathway; isopentenyl diphosphate from 1-deoxy-D-xylulose 5-phosphate: step 1/6. With respect to regulation, inhibited by fosmidomycin and 3-(N-acetyl-N-hydroxyamino)-propylphosphonic acid (FR-900098). Functionally, catalyzes the NADPH-dependent rearrangement and reduction of 1-deoxy-D-xylulose-5-phosphate (DXP) to 2-C-methyl-D-erythritol 4-phosphate (MEP). The protein is 1-deoxy-D-xylulose 5-phosphate reductoisomerase of Pseudomonas aeruginosa (strain ATCC 15692 / DSM 22644 / CIP 104116 / JCM 14847 / LMG 12228 / 1C / PRS 101 / PAO1).